The chain runs to 188 residues: Kappa-casein (188 aa).

The N-terminal stretch at 1–21 (MMKSSFLIVPILALTLPFLGA) is a signal peptide. O-linked (GalNAc...) threonine glycosylation is found at T143 and T148. The residue at position 163 (T163) is a Phosphothreonine. S167 carries the phosphoserine; alternate modification. A glycan (O-linked (GalNAc...) serine; alternate) is linked at S167. O-linked (GalNAc...) threonine glycosylation occurs at T184. The residue at position 185 (S185) is a Phosphoserine.

It belongs to the kappa-casein family. In terms of tissue distribution, mammary gland specific. Secreted in milk.

It localises to the secreted. In terms of biological role, kappa-casein stabilizes micelle formation, preventing casein precipitation in milk. The protein is Kappa-casein (CSN3) of Sus scrofa (Pig).